A 130-amino-acid polypeptide reads, in one-letter code: Small ribosomal subunit protein uS8 (130 aa).

Belongs to the universal ribosomal protein uS8 family. Part of the 30S ribosomal subunit.

Functionally, one of the primary rRNA binding proteins, it binds directly to 16S rRNA central domain where it helps coordinate assembly of the platform of the 30S subunit. The chain is Small ribosomal subunit protein uS8 from Methanoculleus marisnigri (strain ATCC 35101 / DSM 1498 / JR1).